The chain runs to 146 residues: MLNPRRTRFRKQHRGRMRGISTRGNRICFGKFALQALEPTWITARQIEAGRRAITRYARRGGKLWIRIFPDKPITMRPAETRMGSGKGSPEYWVSVVKPGRILYEISGVSENVARAAMKIAAYKMPIRTQFITTIKMKESILDRKE.

It belongs to the universal ribosomal protein uL16 family. As to quaternary structure, part of the 50S ribosomal subunit.

The protein localises to the plastid. It is found in the chloroplast. In Angiopteris evecta (Mule's foot fern), this protein is Large ribosomal subunit protein uL16c.